Here is a 614-residue protein sequence, read N- to C-terminus: Fructokinase-like 2, chloroplastic (614 aa).

The N-terminal 44 residues, 1-44 (MASLSFTQFLSFPRCNADVPCLLQSHGFVKFRGERWNGKQSFSM), are a transit peptide targeting the chloroplast. Disordered regions lie at residues 47-75 (GRRK…KPSK) and 542-592 (GYPP…YVMK). The span at 548–563 (DMEEEEDDEEEDEVES) shows a compositional bias: acidic residues. The segment covering 571-583 (ITEKEYRTSKPYD) has biased composition (basic and acidic residues).

Belongs to the carbohydrate kinase PfkB family. As to quaternary structure, interacts with CITRX/TRXz. Binds to FLN1 and PTAC5. Associates with the plastid-encoded RNA polymerase (PEP) complex.

It is found in the plastid. Its subcellular location is the chloroplast. Functionally, required for proper chloroplast development, most likely through regulating plastid-encoded polymerase (PEP) dependent chloroplast transcription. Acts as a component of the transcriptionally active plastid chromosome that is required for plastid gene expression. This is Fructokinase-like 2, chloroplastic from Arabidopsis thaliana (Mouse-ear cress).